Reading from the N-terminus, the 840-residue chain is Homeobox-leucine zipper protein HOX9 (840 aa).

2 disordered regions span residues 1-26 (MAAAVAMRSGSGSDGGGGGYDKAGMD) and 135-160 (NPSLGNDTSCESNVTTPQNPLRDASN). Residues 12-21 (GSDGGGGGYD) show a composition bias toward gly residues. The segment at residues 26 to 89 (DSGKYVRYTP…NRRCRDKQRK (64 aa)) is a DNA-binding region (homeobox). Residues 86–135 (KQRKEASRLQAVNRKLTAMNKLLMEENERLQKQVSQLVHENAYMKQQLQN) adopt a coiled-coil conformation. An START domain is found at 157–385 (DASNPSGLLT…IAQETSGEVV (229 aa)).

This sequence belongs to the HD-ZIP homeobox family. Class III subfamily. As to expression, expressed in seedlings, roots, stems, leaf sheaths and blades and panicles.

Its subcellular location is the nucleus. Its function is as follows. Probable transcription factor. The protein is Homeobox-leucine zipper protein HOX9 (HOX9) of Oryza sativa subsp. japonica (Rice).